We begin with the raw amino-acid sequence, 734 residues long: DNA replication licensing factor MCM5 (734 aa).

At Ser-2 the chain carries N-acetylserine. The MCM domain occupies 331–537 (IYELISKSIA…RDVMLAKHVI (207 aa)). ADP is bound at residue Arg-371. N6-acetyllysine occurs at positions 392 and 396. The Arginine finger signature appears at 512 to 515 (SRFD). Ser-605 bears the Phosphoserine mark.

This sequence belongs to the MCM family. As to quaternary structure, component of the MCM2-7 complex. The complex forms a toroidal hexameric ring with the proposed subunit order MCM2-MCM6-MCM4-MCM7-MCM3-MCM5. Component of the CMG helicase complex, a hexameric ring of related MCM2-7 subunits stabilized by CDC45 and the tetrameric GINS complex. Interacts with ANKRD17. Interacts with MCMBP. Interacts with TONSL; the interaction is direct.

The protein localises to the nucleus. Its subcellular location is the chromosome. It localises to the cytoplasm. It is found in the cytosol. It catalyses the reaction ATP + H2O = ADP + phosphate + H(+). Acts as a component of the MCM2-7 complex (MCM complex) which is the replicative helicase essential for 'once per cell cycle' DNA replication initiation and elongation in eukaryotic cells. Core component of CDC45-MCM-GINS (CMG) helicase, the molecular machine that unwinds template DNA during replication, and around which the replisome is built. The active ATPase sites in the MCM2-7 ring are formed through the interaction surfaces of two neighboring subunits such that a critical structure of a conserved arginine finger motif is provided in trans relative to the ATP-binding site of the Walker A box of the adjacent subunit. The six ATPase active sites, however, are likely to contribute differentially to the complex helicase activity. This chain is DNA replication licensing factor MCM5, found in Bos taurus (Bovine).